Consider the following 119-residue polypeptide: Large ribosomal subunit protein bL17 (119 aa).

The protein belongs to the bacterial ribosomal protein bL17 family. In terms of assembly, part of the 50S ribosomal subunit. Contacts protein L32.

The sequence is that of Large ribosomal subunit protein bL17 from Psychrobacter arcticus (strain DSM 17307 / VKM B-2377 / 273-4).